The chain runs to 617 residues: Putative type VI secretion system protein VgrGB (617 aa).

The disordered stretch occupies residues 449-469 (RTFHATNPSPYPLPASKTRTS).

It belongs to the VgrG protein family.

Functionally, a Vgr protein that is probably part of a type VI secretion system (T6SS). May be required for export of proteins involved in Rhs-mediated cellular contact-dependent growth inhibition (CDI). In Dickeya dadantii (strain 3937) (Erwinia chrysanthemi (strain 3937)), this protein is Putative type VI secretion system protein VgrGB (vgrGB).